The chain runs to 249 residues: 5'-nucleotidase SurE (249 aa).

Residues Asp8, Asp9, Ser39, and Asn91 each contribute to the a divalent metal cation site.

This sequence belongs to the SurE nucleotidase family. A divalent metal cation is required as a cofactor.

It is found in the cytoplasm. It carries out the reaction a ribonucleoside 5'-phosphate + H2O = a ribonucleoside + phosphate. Functionally, nucleotidase that shows phosphatase activity on nucleoside 5'-monophosphates. The chain is 5'-nucleotidase SurE from Pseudomonas putida (strain ATCC 700007 / DSM 6899 / JCM 31910 / BCRC 17059 / LMG 24140 / F1).